The chain runs to 245 residues: 1-(5-phosphoribosyl)-5-[(5-phosphoribosylamino)methylideneamino] imidazole-4-carboxamide isomerase (245 aa).

The active-site Proton acceptor is Asp7. Catalysis depends on Asp129, which acts as the Proton donor.

It belongs to the HisA/HisF family.

Its subcellular location is the cytoplasm. It catalyses the reaction 1-(5-phospho-beta-D-ribosyl)-5-[(5-phospho-beta-D-ribosylamino)methylideneamino]imidazole-4-carboxamide = 5-[(5-phospho-1-deoxy-D-ribulos-1-ylimino)methylamino]-1-(5-phospho-beta-D-ribosyl)imidazole-4-carboxamide. The protein operates within amino-acid biosynthesis; L-histidine biosynthesis; L-histidine from 5-phospho-alpha-D-ribose 1-diphosphate: step 4/9. This Escherichia coli O6:K15:H31 (strain 536 / UPEC) protein is 1-(5-phosphoribosyl)-5-[(5-phosphoribosylamino)methylideneamino] imidazole-4-carboxamide isomerase.